The sequence spans 566 residues: Proline--tRNA ligase (566 aa).

It belongs to the class-II aminoacyl-tRNA synthetase family. ProS type 1 subfamily. As to quaternary structure, homodimer.

Its subcellular location is the cytoplasm. The catalysed reaction is tRNA(Pro) + L-proline + ATP = L-prolyl-tRNA(Pro) + AMP + diphosphate. Functionally, catalyzes the attachment of proline to tRNA(Pro) in a two-step reaction: proline is first activated by ATP to form Pro-AMP and then transferred to the acceptor end of tRNA(Pro). As ProRS can inadvertently accommodate and process non-cognate amino acids such as alanine and cysteine, to avoid such errors it has two additional distinct editing activities against alanine. One activity is designated as 'pretransfer' editing and involves the tRNA(Pro)-independent hydrolysis of activated Ala-AMP. The other activity is designated 'posttransfer' editing and involves deacylation of mischarged Ala-tRNA(Pro). The misacylated Cys-tRNA(Pro) is not edited by ProRS. This chain is Proline--tRNA ligase, found in Bacillus cytotoxicus (strain DSM 22905 / CIP 110041 / 391-98 / NVH 391-98).